The sequence spans 247 residues: C-type lectin domain family 7 member A (247 aa).

Topologically, residues 1–44 (MEYHPDLENLDEDGYTQLHFDSQSNTRIAVVSEKGSCAASPPWR) are cytoplasmic. Residues 15-18 (YTQL) carry the ITAM-like motif. A helical; Signal-anchor for type II membrane protein membrane pass occupies residues 45–65 (LIAVILGILCLVILVIAVVLG). Residues 66 to 247 (TMAIWRSNSG…YSICEKKFSM (182 aa)) are Extracellular-facing. N91 is a glycosylation site (N-linked (GlcNAc...) asparagine). 3 cysteine pairs are disulfide-bonded: C120–C131, C148–C241, and C220–C233. In terms of domain architecture, C-type lectin spans 127–242 (YEKSCYLFSM…CSVPSYSICE (116 aa)). 146–153 (RQCWQLGS) is a binding site for (1,3-beta-D-glucosyl)n. The a divalent metal cation site is built by K157, D159, and E163. Position 195 (E195) interacts with (1,3-beta-D-glucosyl)n. E242 contacts a divalent metal cation.

Homodimer. Interacts with SYK; participates in leukocyte activation in presence of fungal pathogens. Interacts with CD37; this interaction controls CLEC7A-mediated IL-6 production. In terms of assembly, interacts with RANBP9. In terms of processing, phosphorylated on tyrosine residues in response to beta-glucan binding. Highly expressed in peripheral blood leukocytes and dendritic cells. Detected in spleen, bone marrow, lung, muscle, stomach and placenta.

Its subcellular location is the cell membrane. It localises to the cytoplasm. In terms of biological role, lectin that functions as a pattern recognizing receptor (PRR) specific for beta-1,3-linked and beta-1,6-linked glucans, which constitute cell wall constituents from pathogenic bacteria and fungi. Necessary for the TLR2-mediated inflammatory response and activation of NF-kappa-B: upon beta-glucan binding, recruits SYK via its ITAM motif and promotes a signaling cascade that activates some CARD domain-BCL10-MALT1 (CBM) signalosomes, leading to the activation of NF-kappa-B and MAP kinase p38 (MAPK11, MAPK12, MAPK13 and/or MAPK14) pathways which stimulate expression of genes encoding pro-inflammatory cytokines and chemokines. Enhances cytokine production in macrophages and dendritic cells. Mediates production of reactive oxygen species in the cell. Mediates phagocytosis of C.albicans conidia. Binds T-cells in a way that does not involve their surface glycans and plays a role in T-cell activation. Stimulates T-cell proliferation. Induces phosphorylation of SCIMP after binding beta-glucans. The polypeptide is C-type lectin domain family 7 member A (Homo sapiens (Human)).